The chain runs to 149 residues: Cytochrome c-type biogenesis protein CcmE (149 aa).

Residues 1-7 (MKARHKR) lie on the Cytoplasmic side of the membrane. Residues 8–28 (LGLIVAGLAALGLGAALVLSA) traverse the membrane as a helical; Signal-anchor for type II membrane protein segment. The Periplasmic segment spans residues 29–149 (FQKNLVFFFT…GAPALAGALK (121 aa)). Residues His123 and Tyr127 each coordinate heme.

It belongs to the CcmE/CycJ family.

The protein resides in the cell inner membrane. Functionally, heme chaperone required for the biogenesis of c-type cytochromes. Transiently binds heme delivered by CcmC and transfers the heme to apo-cytochromes in a process facilitated by CcmF and CcmH. The sequence is that of Cytochrome c-type biogenesis protein CcmE from Polaromonas naphthalenivorans (strain CJ2).